The following is a 970-amino-acid chain: Phosphoenolpyruvate carboxylase 1 (970 aa).

Serine 15 is subject to Phosphoserine. Active-site residues include histidine 177, lysine 606, and arginine 647.

The protein belongs to the PEPCase type 1 family. As to quaternary structure, homotetramer. Mg(2+) serves as cofactor.

It localises to the cytoplasm. The catalysed reaction is oxaloacetate + phosphate = phosphoenolpyruvate + hydrogencarbonate. It functions in the pathway photosynthesis; C4 acid pathway. By light-reversible phosphorylation. Through the carboxylation of phosphoenolpyruvate (PEP) it forms oxaloacetate, a four-carbon dicarboxylic acid source for the tricarboxylic acid cycle. The sequence is that of Phosphoenolpyruvate carboxylase 1 (PEP1) from Zea mays (Maize).